The chain runs to 296 residues: Protease HtpX homolog (296 aa).

The next 2 helical transmembrane spans lie at 14-34 and 39-59; these read VVLL…VGYL and YQFG…SMIF. Residue histidine 143 participates in Zn(2+) binding. The active site involves glutamate 144. Zn(2+) is bound at residue histidine 147. 2 helical membrane passes run 158 to 178 and 195 to 215; these read IAVA…RMLF and ILVL…ASLV. A Zn(2+)-binding site is contributed by glutamate 224.

The protein belongs to the peptidase M48B family. Zn(2+) serves as cofactor.

The protein localises to the cell membrane. This is Protease HtpX homolog from Streptococcus agalactiae serotype Ia (strain ATCC 27591 / A909 / CDC SS700).